The primary structure comprises 704 residues: 1,4-alpha-glucan-branching enzyme (704 aa).

Positions 94 and 131 each coordinate (1,4-alpha-D-glucosyl)n. A Phosphoserine modification is found at Ser190. Catalysis depends on Asp356, which acts as the Nucleophile. The active-site Proton donor is the Glu417.

This sequence belongs to the glycosyl hydrolase 13 family. GlgB subfamily.

The protein localises to the cytoplasm. It catalyses the reaction Transfers a segment of a (1-&gt;4)-alpha-D-glucan chain to a primary hydroxy group in a similar glucan chain.. It participates in glycan biosynthesis; glycogen biosynthesis. Glycogen-branching enzyme participates in the glycogen biosynthetic process along with glycogenin and glycogen synthase. Generates alpha-1,6-glucosidic branches from alpha-1,4-linked glucose chains, to increase solubility of the glycogen polymer. This Saccharomyces cerevisiae (strain ATCC 204508 / S288c) (Baker's yeast) protein is 1,4-alpha-glucan-branching enzyme (GLC3).